Reading from the N-terminus, the 793-residue chain is E3 ubiquitin-protein ligase UHRF1 (793 aa).

The Ubiquitin-like domain occupies 1-78; that stretch reads MWIQVRTMDG…IQLLVRQSLV (78 aa). Phosphoserine occurs at positions 76, 91, 95, and 165. Residues 82–124 are disordered; the sequence is STKERDSELSDTDSGCCLGQSESDKSSTHGEAAAETDSRPADE. Tudor-like regions lie at residues 133–209 and 216–283; these read GLYK…ARAR and DLEV…IERP. A Glycyl lysine isopeptide (Lys-Gly) (interchain with G-Cter in SUMO2) cross-link involves residue Lys-279. The residue at position 287 (Ser-287) is a Phosphoserine. The segment at 296 to 301 is linker; sequence RKSGPS. The residue at position 298 (Ser-298) is a Phosphoserine; by PKA. Residues 310–366 form a PHD-type zinc finger; that stretch reads NRLCRVCACHLCGGRQDPDKQLMCDECDMAFHIYCLDPPLSSVPSEDEWYCPECRND. Histone H3R2me0 binding stretches follow at residues 333 to 337 and 353 to 355; these read CDECD and PSE. Ser-368 carries the post-translational modification Phosphoserine. A Glycyl lysine isopeptide (Lys-Gly) (interchain with G-Cter in SUMO2) cross-link involves residue Lys-385. An N6-acetyllysine modification is found at Lys-399. The YDG domain occupies 419–582; the sequence is GPIPGIPVGT…FLVWRYLLRR (164 aa). Positions 445–446 are required to promote base flipping; it reads HV. DNA-binding positions include 463-464 and Asp-469; that span reads AG. Required for formation of a 5-methylcytosine-binding pocket stretches follow at residues 466 to 469 and 478 to 481; these read YEDD and YTGS. The residue at position 546 (Lys-546) is an N6-acetyllysine; alternate. Residue Lys-546 forms a Glycyl lysine isopeptide (Lys-Gly) (interchain with G-Cter in SUMO2); alternate linkage. The span at 618–629 shows a compositional bias: basic and acidic residues; the sequence is REREKENSKREE. The tract at residues 618-673 is disordered; that stretch reads REREKENSKREEEEQQEGGFASPRTGKGKWKRKSAGGGPSRAGSPRRTSKKTKVEP. Phosphoserine; by CDK1 is present on Ser-639. Ser-651 carries the post-translational modification Phosphoserine. A Glycyl lysine isopeptide (Lys-Gly) (interchain with G-Cter in SUMO2) cross-link involves residue Lys-670. A phosphoserine mark is found at Ser-707 and Ser-709. The segment at 724 to 763 adopts an RING-type zinc-finger fold; sequence CICCQELVFRPITTVCQHNVCKDCLDRSFRAQVFSCPACR.

Interacts with DNMT3A and DNMT3B. Interacts with DNMT1; the interaction is direct. Interacts with USP7; leading to its deubiquitination. Interacts with histone H3. Interacts with HDAC1, but not with HDAC2. Interacts with BLTP3A. Interacts with PML. Interacts with EHMT2. Binds hemimethylated CpG containing oligonucleotides. Interacts with ZNF263; recruited to the SIX3 promoter along with other proteins involved in chromatin modification and transcriptional corepression where it contributes to transcriptional repression. Interacts with UHRF2. Interacts with FANCD2. Interacts with TET1 isoform 2; this interaction induces the recruitment of TET1 isoform 2 to replicating heterochromatin. In terms of processing, phosphorylation at Ser-298 of the linker region decreases the binding to H3K9me3. Phosphorylation at Ser-639 by CDK1 during M phase impairs interaction with USP7, preventing deubiquitination and leading to degradation by the proteasome. Post-translationally, ubiquitinated; which leads to proteasomal degradation. Autoubiquitinated; interaction with USP7 leads to deubiquitination and prevents degradation. Ubiquitination and degradation takes place during M phase, when phosphorylation at Ser-639 prevents interaction with USP7 and subsequent deubiquitination. Polyubiquitination may be stimulated by DNA damage. In terms of tissue distribution, expressed in thymus, bone marrow, testis, lung and heart. Overexpressed in breast cancer.

The protein localises to the nucleus. It catalyses the reaction S-ubiquitinyl-[E2 ubiquitin-conjugating enzyme]-L-cysteine + [acceptor protein]-L-lysine = [E2 ubiquitin-conjugating enzyme]-L-cysteine + N(6)-ubiquitinyl-[acceptor protein]-L-lysine.. The protein operates within protein modification; protein ubiquitination. Functionally, multidomain protein that acts as a key epigenetic regulator by bridging DNA methylation and chromatin modification. Specifically recognizes and binds hemimethylated DNA at replication forks via its YDG domain and recruits DNMT1 methyltransferase to ensure faithful propagation of the DNA methylation patterns through DNA replication. In addition to its role in maintenance of DNA methylation, also plays a key role in chromatin modification: through its tudor-like regions and PHD-type zinc fingers, specifically recognizes and binds histone H3 trimethylated at 'Lys-9' (H3K9me3) and unmethylated at 'Arg-2' (H3R2me0), respectively, and recruits chromatin proteins. Enriched in pericentric heterochromatin where it recruits different chromatin modifiers required for this chromatin replication. Also localizes to euchromatic regions where it negatively regulates transcription possibly by impacting DNA methylation and histone modifications. Has E3 ubiquitin-protein ligase activity by mediating the ubiquitination of target proteins such as histone H3 and PML. It is still unclear how E3 ubiquitin-protein ligase activity is related to its role in chromatin in vivo. Plays a role in DNA repair by cooperating with UHRF2 to ensure recruitment of FANCD2 to interstrand cross-links (ICLs) leading to FANCD2 activation. Acts as a critical player of proper spindle architecture by catalyzing the 'Lys-63'-linked ubiquitination of KIF11, thereby controlling KIF11 localization on the spindle. The protein is E3 ubiquitin-protein ligase UHRF1 (UHRF1) of Homo sapiens (Human).